Here is a 115-residue protein sequence, read N- to C-terminus: Thiosulfate:glutathione sulfurtransferase (115 aa).

The Rhodanese domain maps to alanine 17 to serine 115. The Cysteine persulfide intermediate role is filled by cysteine 79.

As to expression, highly expressed in kidney, liver and skeletal muscle. Lower levels of expression in heart, colon, thymus, spleen, placenta and lung. Weakly expressed in brain, small intestine and peripheral blood leukocytes. Expressed at high levels in the breast carcinoma cell lines MCF-7 and MDA-MB-468 and at a lower level in the breast carcinoma cell line MDA-MB-231, the colon carcinoma call line LoVo and the lung carcinoma cell line A-549. No expression in the cell lines EFO-27 and HeLa, or the normal breast tissue cell lines MCF-10A and H184A1. Detected in invasive ductal carcinoma, but not in the adjacent tissues.

The protein localises to the cytoplasm. It is found in the perinuclear region. It catalyses the reaction thiosulfate + glutathione = S-sulfanylglutathione + sulfite + H(+). The catalysed reaction is thiosulfate + 2 glutathione = glutathione disulfide + hydrogen sulfide + sulfite + 2 H(+). With respect to regulation, GSS(-) is a potent inhibitor of TSTD1, since the presence of the sulfur dioxygenase (SDO) strongly increases the TSTD1 catalytic activity. Functionally, thiosulfate:glutathione sulfurtransferase (TST) required to produce S-sulfanylglutathione (GSS(-)), a central intermediate in hydrogen sulfide metabolism. Provides the link between the first step in mammalian H(2)S metabolism performed by the sulfide:quinone oxidoreductase (SQOR) which catalyzes the conversion of H(2)S to thiosulfate, and the sulfur dioxygenase (SDO) which uses GSS(-) as substrate. The thermodynamic coupling of the irreversible SDO and reversible TST reactions provides a model for the physiologically relevant reaction with thiosulfate as the sulfane donor. GSS(-) spontaneously reacts with glutathione to form glutathione disulfide. This Homo sapiens (Human) protein is Thiosulfate:glutathione sulfurtransferase (TSTD1).